Consider the following 105-residue polypeptide: Antithrombin-III (105 aa).

The first 17 residues, 1–17, serve as a signal peptide directing secretion; the sequence is MHLFIGVSLRPLGHGIP. Positions 38–105 are disordered; the sequence is ICIYRNPEKK…MRRTSSCRPS (68 aa). Basic and acidic residues predominate over residues 43–53; sequence NPEKKPQERRG.

Belongs to the serpin family. As to quaternary structure, forms protease inhibiting heterodimer with TMPRSS7. As to expression, plasma.

It is found in the secreted. The protein localises to the extracellular space. Most important serine protease inhibitor in plasma that regulates the blood coagulation cascade. AT-III inhibits thrombin, matriptase-3/TMPRSS7, as well as factors IXa, Xa and XIa. Its inhibitory activity is greatly enhanced in the presence of heparin. The chain is Antithrombin-III (SERPINC1) from Gallus gallus (Chicken).